The following is a 133-amino-acid chain: Fluoride-specific ion channel FluC (133 aa).

4 helical membrane passes run 5 to 25 (VPAT…LGAL), 43 to 63 (VATL…YVVI), 76 to 96 (VIMI…IESL), and 108 to 128 (ISYV…AIVL). 2 residues coordinate Na(+): Gly83 and Thr86.

The protein belongs to the fluoride channel Fluc/FEX (TC 1.A.43) family.

It localises to the cell inner membrane. It catalyses the reaction fluoride(in) = fluoride(out). Na(+) is not transported, but it plays an essential structural role and its presence is essential for fluoride channel function. Functionally, fluoride-specific ion channel. Important for reducing fluoride concentration in the cell, thus reducing its toxicity. The protein is Fluoride-specific ion channel FluC of Saccharophagus degradans (strain 2-40 / ATCC 43961 / DSM 17024).